A 66-amino-acid chain; its full sequence is Large ribosomal subunit protein bL35 (66 aa).

The span at 1–16 (MPKQKTHRASAKRFKR) shows a compositional bias: basic residues. The interval 1-21 (MPKQKTHRASAKRFKRTGNGG) is disordered.

Belongs to the bacterial ribosomal protein bL35 family.

This chain is Large ribosomal subunit protein bL35, found in Lactococcus lactis subsp. cremoris (strain MG1363).